A 252-amino-acid polypeptide reads, in one-letter code: Thiazole synthase (252 aa).

Lys-91 serves as the catalytic Schiff-base intermediate with DXP. Residues Gly-152, Ala-179–Gly-180, and Asn-201–Thr-202 each bind 1-deoxy-D-xylulose 5-phosphate.

It belongs to the ThiG family. In terms of assembly, homotetramer. Forms heterodimers with either ThiH or ThiS.

It is found in the cytoplasm. It carries out the reaction [ThiS sulfur-carrier protein]-C-terminal-Gly-aminoethanethioate + 2-iminoacetate + 1-deoxy-D-xylulose 5-phosphate = [ThiS sulfur-carrier protein]-C-terminal Gly-Gly + 2-[(2R,5Z)-2-carboxy-4-methylthiazol-5(2H)-ylidene]ethyl phosphate + 2 H2O + H(+). It participates in cofactor biosynthesis; thiamine diphosphate biosynthesis. Its function is as follows. Catalyzes the rearrangement of 1-deoxy-D-xylulose 5-phosphate (DXP) to produce the thiazole phosphate moiety of thiamine. Sulfur is provided by the thiocarboxylate moiety of the carrier protein ThiS. In vitro, sulfur can be provided by H(2)S. This is Thiazole synthase from Gluconobacter oxydans (strain 621H) (Gluconobacter suboxydans).